A 109-amino-acid chain; its full sequence is Flagellar hook-basal body complex protein FliE (109 aa).

Belongs to the FliE family.

It is found in the bacterial flagellum basal body. The sequence is that of Flagellar hook-basal body complex protein FliE from Stutzerimonas stutzeri (strain A1501) (Pseudomonas stutzeri).